A 424-amino-acid polypeptide reads, in one-letter code: Inhibin beta A chain (424 aa).

A signal peptide spans 1 to 20 (MPLLWKRGFLLVICWIIVRS). Positions 21-308 (SPTPGSEGHS…EDRQHRRRER (288 aa)) are excised as a propeptide. A glycan (N-linked (GlcNAc...) asparagine) is linked at Asn165. Disordered stretches follow at residues 178-200 (QQRQ…LKGE) and 260-288 (KKKK…QSHR). Over residues 263-275 (KEDDGEGKEKDGG) the composition is skewed to basic and acidic residues. 4 cysteine pairs are disulfide-bonded: Cys312-Cys320, Cys319-Cys389, Cys348-Cys421, and Cys352-Cys423.

Belongs to the TGF-beta family. In terms of assembly, dimeric, linked by one or more disulfide bonds. Inhibin A is a dimer of alpha and beta-A. Inhibin B is a dimer of alpha and beta-B. Activin A is a homodimer of beta-A. Activin B is a homodimer of beta-B. Activin AB is a dimer of beta-A and beta-B. In terms of tissue distribution, ciliary ganglion neurons. Levels are higher in the choroid than the iris.

It localises to the secreted. Inhibins and activins inhibit and activate, respectively, the secretion of follitropin by the pituitary gland. Inhibins/activins are involved in regulating a number of diverse functions such as hypothalamic and pituitary hormone secretion, gonadal hormone secretion, germ cell development and maturation, erythroid differentiation, insulin secretion, nerve cell survival, embryonic axial development or bone growth, depending on their subunit composition. Inhibins appear to oppose the functions of activins. Induces somatostatin in the ciliary ganglion neurons and may play a role in regulating neurotransmitter phenotype. The polypeptide is Inhibin beta A chain (INHBA) (Gallus gallus (Chicken)).